The primary structure comprises 340 residues: Phosphoribosylformylglycinamidine cyclo-ligase (340 aa).

It belongs to the AIR synthase family.

The protein localises to the cytoplasm. It carries out the reaction 2-formamido-N(1)-(5-O-phospho-beta-D-ribosyl)acetamidine + ATP = 5-amino-1-(5-phospho-beta-D-ribosyl)imidazole + ADP + phosphate + H(+). It participates in purine metabolism; IMP biosynthesis via de novo pathway; 5-amino-1-(5-phospho-D-ribosyl)imidazole from N(2)-formyl-N(1)-(5-phospho-D-ribosyl)glycinamide: step 2/2. The sequence is that of Phosphoribosylformylglycinamidine cyclo-ligase from Streptococcus agalactiae serotype V (strain ATCC BAA-611 / 2603 V/R).